We begin with the raw amino-acid sequence, 177 residues long: von Ebner gland protein 2 (177 aa).

Positions 1–18 are cleaved as a signal peptide; the sequence is MKALLLTFSLSLLAALQA. The cysteines at positions 80 and 172 are disulfide-linked.

The protein belongs to the calycin superfamily. Lipocalin family. In terms of assembly, homodimer.

The protein localises to the secreted. Could play a role in taste reception. Could be necessary for the concentration and delivery of sapid molecules in the gustatory system. This Rattus norvegicus (Rat) protein is von Ebner gland protein 2 (Vegp2).